The following is a 254-amino-acid chain: uncharacterized protein (254 aa).

This is an uncharacterized protein from Aedes vexans (Inland floodwater mosquito).